We begin with the raw amino-acid sequence, 304 residues long: Recombination-associated protein RdgC (304 aa).

Belongs to the RdgC family.

The protein resides in the cytoplasm. It localises to the nucleoid. May be involved in recombination. This chain is Recombination-associated protein RdgC, found in Shewanella baltica (strain OS195).